Reading from the N-terminus, the 225-residue chain is Enolase-phosphatase E1 (225 aa).

The protein belongs to the HAD-like hydrolase superfamily. MasA/MtnC family. As to quaternary structure, monomer. It depends on Mg(2+) as a cofactor.

The enzyme catalyses 5-methylsulfanyl-2,3-dioxopentyl phosphate + H2O = 1,2-dihydroxy-5-(methylsulfanyl)pent-1-en-3-one + phosphate. It participates in amino-acid biosynthesis; L-methionine biosynthesis via salvage pathway; L-methionine from S-methyl-5-thio-alpha-D-ribose 1-phosphate: step 3/6. Its pathway is amino-acid biosynthesis; L-methionine biosynthesis via salvage pathway; L-methionine from S-methyl-5-thio-alpha-D-ribose 1-phosphate: step 4/6. Bifunctional enzyme that catalyzes the enolization of 2,3-diketo-5-methylthiopentyl-1-phosphate (DK-MTP-1-P) into the intermediate 2-hydroxy-3-keto-5-methylthiopentenyl-1-phosphate (HK-MTPenyl-1-P), which is then dephosphorylated to form the acireductone 1,2-dihydroxy-3-keto-5-methylthiopentene (DHK-MTPene). The protein is Enolase-phosphatase E1 of Pseudomonas aeruginosa (strain LESB58).